Consider the following 431-residue polypeptide: Tyrosine--tRNA ligase (431 aa).

Residue Y33 coordinates L-tyrosine. Residues P38–S47 carry the 'HIGH' region motif. Y172 and Q176 together coordinate L-tyrosine. The 'KMSKS' region signature appears at K234–S238. Position 237 (K237) interacts with ATP. The region spanning L364 to V431 is the S4 RNA-binding domain.

This sequence belongs to the class-I aminoacyl-tRNA synthetase family. TyrS type 1 subfamily. In terms of assembly, homodimer.

The protein localises to the cytoplasm. It carries out the reaction tRNA(Tyr) + L-tyrosine + ATP = L-tyrosyl-tRNA(Tyr) + AMP + diphosphate + H(+). Its function is as follows. Catalyzes the attachment of tyrosine to tRNA(Tyr) in a two-step reaction: tyrosine is first activated by ATP to form Tyr-AMP and then transferred to the acceptor end of tRNA(Tyr). In Flavobacterium johnsoniae (strain ATCC 17061 / DSM 2064 / JCM 8514 / BCRC 14874 / CCUG 350202 / NBRC 14942 / NCIMB 11054 / UW101) (Cytophaga johnsonae), this protein is Tyrosine--tRNA ligase.